The following is a 57-amino-acid chain: Large ribosomal subunit protein eL20 (57 aa).

Belongs to the eukaryotic ribosomal protein eL20 family. In terms of assembly, part of the 50S ribosomal subunit. Binds 23S rRNA.

The protein is Large ribosomal subunit protein eL20 of Halorhabdus utahensis (strain DSM 12940 / JCM 11049 / AX-2).